The primary structure comprises 331 residues: D/L-glyceraldehyde reductase (331 aa).

Tyr-51 (proton donor) is an active-site residue. Position 114 (His-114) interacts with substrate. Position 213–276 (213–276 (SAFGNNTKGL…SVTKARIAEN (64 aa))) interacts with NADP(+).

Belongs to the aldo/keto reductase family.

It catalyses the reaction glycerol + NADP(+) = L-glyceraldehyde + NADPH + H(+). It carries out the reaction glycerol + NADP(+) = D-glyceraldehyde + NADPH + H(+). It participates in carbohydrate acid metabolism. In terms of biological role, mediates the conversion of L-glyceraldehyde to glycerol in D-galacturonate catabolic process. Also able to reduce D-glyceraldehyde. This is D/L-glyceraldehyde reductase (gld1) from Hypocrea jecorina (Trichoderma reesei).